A 302-amino-acid polypeptide reads, in one-letter code: Tyrosine recombinase XerC (302 aa).

One can recognise a Core-binding (CB) domain in the interval 6-90 (DLEVTCLQDY…AIKQWGEFLL (85 aa)). The Tyr recombinase domain maps to 111 to 290 (PLPKNMDVDS…DFQHLAKVYD (180 aa)). Residues Arg150, Lys174, His242, Arg245, and His268 contribute to the active site. Tyr277 serves as the catalytic O-(3'-phospho-DNA)-tyrosine intermediate.

This sequence belongs to the 'phage' integrase family. XerC subfamily. As to quaternary structure, forms a cyclic heterotetrameric complex composed of two molecules of XerC and two molecules of XerD.

It is found in the cytoplasm. Site-specific tyrosine recombinase, which acts by catalyzing the cutting and rejoining of the recombining DNA molecules. The XerC-XerD complex is essential to convert dimers of the bacterial chromosome into monomers to permit their segregation at cell division. It also contributes to the segregational stability of plasmids. The polypeptide is Tyrosine recombinase XerC (Shewanella putrefaciens (strain CN-32 / ATCC BAA-453)).